A 474-amino-acid chain; its full sequence is Glycogen synthase (474 aa).

Residue lysine 15 coordinates ADP-alpha-D-glucose.

Belongs to the glycosyltransferase 1 family. Bacterial/plant glycogen synthase subfamily.

The catalysed reaction is [(1-&gt;4)-alpha-D-glucosyl](n) + ADP-alpha-D-glucose = [(1-&gt;4)-alpha-D-glucosyl](n+1) + ADP + H(+). The protein operates within glycan biosynthesis; glycogen biosynthesis. Functionally, synthesizes alpha-1,4-glucan chains using ADP-glucose. The polypeptide is Glycogen synthase (Finegoldia magna (strain ATCC 29328 / DSM 20472 / WAL 2508) (Peptostreptococcus magnus)).